The following is a 496-amino-acid chain: FAD-linked oxidoreductase AFUA_1G00980 (496 aa).

The signal sequence occupies residues 1–21 (MRRATLIPLAIWVAGAAAAAA). N-linked (GlcNAc...) asparagine glycosylation is found at asparagine 49, asparagine 122, asparagine 205, asparagine 258, asparagine 344, asparagine 351, asparagine 371, and asparagine 382. The FAD-binding PCMH-type domain occupies 64-243 (MAPTYAVSVR…VEAVYQVTDL (180 aa)).

This sequence belongs to the oxygen-dependent FAD-linked oxidoreductase family. Requires FAD as cofactor.

In terms of biological role, FAD-linked oxidoreductase; part of the gene cluster that mediates the biosynthesis of fumigermin that inhibits germination of spores of the inducing S.rapamycinicus, and thus helps the fungus to defend resources in the shared habitat against a bacterial competitor. The partially reducing polyketide synthase fngA alone is sufficient for the production of fumigermin. FgnA catalyzes the condensation of 3 malonyl-CoA units to an acetyl-CoA starter, and 3 methylations to yield fumigermin. It is remarkable that the five cluster genes including fgnA are conserved in distantly related fungi, supporting the assumption of a fumigermin cluster; it is thus possible that originally all five genes were functional, but that the genes encoding tailoring enzymes became inactive from mutations, similar to the case of the fgnA gene in strains A1163 and Af293. The protein is FAD-linked oxidoreductase AFUA_1G00980 of Aspergillus fumigatus (strain ATCC MYA-4609 / CBS 101355 / FGSC A1100 / Af293) (Neosartorya fumigata).